We begin with the raw amino-acid sequence, 435 residues long: Serine--tRNA ligase (435 aa).

Residue 240 to 242 (TAE) participates in L-serine binding. Position 271 to 273 (271 to 273 (RSE)) interacts with ATP. Position 294 (Glu294) interacts with L-serine. 358–361 (EISS) contributes to the ATP binding site. Ser393 provides a ligand contact to L-serine.

The protein belongs to the class-II aminoacyl-tRNA synthetase family. Type-1 seryl-tRNA synthetase subfamily. Homodimer. The tRNA molecule binds across the dimer.

Its subcellular location is the cytoplasm. It catalyses the reaction tRNA(Ser) + L-serine + ATP = L-seryl-tRNA(Ser) + AMP + diphosphate + H(+). The enzyme catalyses tRNA(Sec) + L-serine + ATP = L-seryl-tRNA(Sec) + AMP + diphosphate + H(+). It functions in the pathway aminoacyl-tRNA biosynthesis; selenocysteinyl-tRNA(Sec) biosynthesis; L-seryl-tRNA(Sec) from L-serine and tRNA(Sec): step 1/1. In terms of biological role, catalyzes the attachment of serine to tRNA(Ser). Is also able to aminoacylate tRNA(Sec) with serine, to form the misacylated tRNA L-seryl-tRNA(Sec), which will be further converted into selenocysteinyl-tRNA(Sec). The chain is Serine--tRNA ligase from Cupriavidus metallidurans (strain ATCC 43123 / DSM 2839 / NBRC 102507 / CH34) (Ralstonia metallidurans).